We begin with the raw amino-acid sequence, 1013 residues long: MTRILNCLLVLLACLGVSSKAEDQAVTQWPLQDNGLNTVVQWDHYSFQINGQRIFIFSGEFHYWRIPVPALWRDILEKIKAAGFTAFAFYSSWAYHAPNNATVDFTTGARDITPIFELAKELGMYIIVRPGPYVNAEANAGGFPLWVTTGDYGTLRNDDTRYTNAWTPYFTEVTEITSRYQVTDGHYSIVYQIENEYGNQWLGDPTLRVPNETAIAYMELLKANARDNGITLPLTVNDPNMKTHSWGKDWSDAGGNVDVAGLDSYPSCWTCDISQCTSTNGAYVPFQVLEYHDYFQESQPSMPAFMPEFQGGSYNPWGGPEGGCPGDIGDDFANLFYRWNIGQRVTAMSLYMMFGGQNPGAMAAPVTASSYDYSAPISEDRSIWSKYHETKLLALFTRSAKDLTMTELMGNGTQYTDNPAVRAYELRNPETNSAFYATFHSNTSISTNEPFHLKVNTSAGVLTVPKYASTIRLNGHQSKIIVTDFTFGSKSLLYSTAEVLTYAVFDKKPTLVLWVPTGESGEFSIKGAKKGSIKKCQGCSRVKFIKEHGGLTTSLTQSAGMTVLEFDDGVRVILLDRTSAYDFWAPALTNDPFVPETESVLIQGPYLVRDAKLSGSKLAITGDVVNATTLDVFAPKGVKSVTWNGKKVDTHSTEYGSLKGSLDAPQSIKLPALASWKSKDSLPERFADYDDSGAAWVDANHMTTLNPRTPTSLPVLYADQYGFHNGVRLWRGYFNGTATGAFINVQGGSAFGWSAWLNGEFLASHLGNATTSQANLSLSFTDATLHTDTPNVLLIVHDDTGHDQTTGALNPRGIMDAKLLGSDSGFTHWRLAGTAGGESDLDPVRGVYNEDGLFAERVGWHLPGFDDSDWGEEGSAKDSTTSVLSFEGATVRFFRTTCPLDIPAHTDVSISFVLSTPAGATTEYRAQLFVNGYQYGRYNPYIGNQVVYPVPVGILDYKGENTIGVAVWAQSEEGASIGIDWRVNYLADSSLDVASWDTKDLRPGWTEERVKYA.

A signal peptide spans 1–21 (MTRILNCLLVLLACLGVSSKA). Tyrosine 90 contacts substrate. N-linked (GlcNAc...) asparagine glycosylation is present at asparagine 100. 4 residues coordinate substrate: asparagine 135, alanine 136, glutamate 137, and asparagine 195. Glutamate 196 serves as the catalytic Proton donor. N-linked (GlcNAc...) asparagine glycosylation is present at asparagine 211. Tyrosine 265 serves as a coordination point for substrate. The cysteines at positions 271 and 324 are disulfide-linked. Residue glutamate 308 is the Nucleophile of the active site. Position 373 (tyrosine 373) interacts with substrate. 7 N-linked (GlcNAc...) asparagine glycosylation sites follow: asparagine 411, asparagine 442, asparagine 456, asparagine 626, asparagine 735, asparagine 768, and asparagine 775.

The protein belongs to the glycosyl hydrolase 35 family.

It is found in the secreted. The catalysed reaction is Hydrolysis of terminal non-reducing beta-D-galactose residues in beta-D-galactosides.. Its function is as follows. Cleaves beta-linked terminal galactosyl residues from gangliosides, glycoproteins, and glycosaminoglycans. The protein is Probable beta-galactosidase B (lacB) of Penicillium rubens (strain ATCC 28089 / DSM 1075 / NRRL 1951 / Wisconsin 54-1255) (Penicillium chrysogenum).